A 429-amino-acid polypeptide reads, in one-letter code: Adenylosuccinate synthetase (429 aa).

GTP contacts are provided by residues 12 to 18 (GDEGKGK) and 40 to 42 (GHT). The Proton acceptor role is filled by Asp13. Mg(2+) is bound by residues Asp13 and Gly40. IMP is bound by residues 13–16 (DEGK), 38–41 (NAGH), Thr129, Arg143, Gln223, Thr238, and Arg302. Catalysis depends on His41, which acts as the Proton donor. 298–304 (TVTGRKR) is a binding site for substrate. GTP contacts are provided by residues Arg304, 330–332 (KLD), and 412–414 (STS).

Belongs to the adenylosuccinate synthetase family. Homodimer. Requires Mg(2+) as cofactor.

Its subcellular location is the cytoplasm. The enzyme catalyses IMP + L-aspartate + GTP = N(6)-(1,2-dicarboxyethyl)-AMP + GDP + phosphate + 2 H(+). It participates in purine metabolism; AMP biosynthesis via de novo pathway; AMP from IMP: step 1/2. In terms of biological role, plays an important role in the de novo pathway of purine nucleotide biosynthesis. Catalyzes the first committed step in the biosynthesis of AMP from IMP. The chain is Adenylosuccinate synthetase from Rhizorhabdus wittichii (strain DSM 6014 / CCUG 31198 / JCM 15750 / NBRC 105917 / EY 4224 / RW1) (Sphingomonas wittichii).